The sequence spans 939 residues: Isoleucine--tRNA ligase (939 aa).

Positions 58 to 68 (PYANGNIHIGH) match the 'HIGH' region motif. Glu-562 lines the L-isoleucyl-5'-AMP pocket. The 'KMSKS' region signature appears at 603-607 (KMSKS). Residue Lys-606 coordinates ATP. Positions 903, 906, 922, and 925 each coordinate Zn(2+).

Belongs to the class-I aminoacyl-tRNA synthetase family. IleS type 1 subfamily. In terms of assembly, monomer. Requires Zn(2+) as cofactor.

Its subcellular location is the cytoplasm. It carries out the reaction tRNA(Ile) + L-isoleucine + ATP = L-isoleucyl-tRNA(Ile) + AMP + diphosphate. In terms of biological role, catalyzes the attachment of isoleucine to tRNA(Ile). As IleRS can inadvertently accommodate and process structurally similar amino acids such as valine, to avoid such errors it has two additional distinct tRNA(Ile)-dependent editing activities. One activity is designated as 'pretransfer' editing and involves the hydrolysis of activated Val-AMP. The other activity is designated 'posttransfer' editing and involves deacylation of mischarged Val-tRNA(Ile). The polypeptide is Isoleucine--tRNA ligase (Buchnera aphidicola subsp. Baizongia pistaciae (strain Bp)).